The following is a 459-amino-acid chain: Cysteine--tRNA ligase (459 aa).

Residue cysteine 28 coordinates Zn(2+). A 'HIGH' region motif is present at residues 30-40 (VTVYDLCHIGH). 3 residues coordinate Zn(2+): cysteine 209, histidine 234, and glutamate 238. The 'KMSKS' region motif lies at 266–270 (KMSKS). Position 269 (lysine 269) interacts with ATP.

The protein belongs to the class-I aminoacyl-tRNA synthetase family. Monomer. It depends on Zn(2+) as a cofactor.

The protein resides in the cytoplasm. The catalysed reaction is tRNA(Cys) + L-cysteine + ATP = L-cysteinyl-tRNA(Cys) + AMP + diphosphate. The chain is Cysteine--tRNA ligase from Haemophilus influenzae (strain PittGG).